A 394-amino-acid polypeptide reads, in one-letter code: Putative gustatory receptor 22a (394 aa).

The Cytoplasmic portion of the chain corresponds to 1–16 (MSQPKRIHRICKGLAR). Residues 17–37 (FTIRATLYGSWVLGLFPFTFD) traverse the membrane as a helical segment. The Extracellular portion of the chain corresponds to 38–47 (SRKRRLNRSK). The N-linked (GlcNAc...) asparagine glycan is linked to asparagine 44. The helical transmembrane segment at 48–68 (WLLAYGLVLNLTLLVLSMLPS) threads the bilayer. Residues 69–148 (TDDHNSVKVE…HTFNRYVIEK (80 aa)) are Cytoplasmic-facing. The chain crosses the membrane as a helical span at residues 149–169 (GLVIILEIGSSLVLYFGIPNS). A topological domain (extracellular) is located at residue lysine 170. The helical transmembrane segment at 171–191 (IVVYEAVCIYIVQLEVLMVVM) threads the bilayer. Over 192 to 256 (HFHLAVIYIY…TAIYDIQVTL (65 aa)) the chain is Cytoplasmic. Residues 257 to 277 (FMATLFSVNIIVGHVLVICWI) traverse the membrane as a helical segment. N-linked (GlcNAc...) asparagine glycosylation occurs at asparagine 278. Topologically, residues 278–281 (NITR) are extracellular. Residues 282–302 (FSLLVIFLLFPQALIINFWDL) traverse the membrane as a helical segment. Residues 303–361 (WQGIAFCDLAESTGKKTSMILKLFNDMENMDQETERRVTEFTLFCSHRRLKVCHLGLLD) lie on the Cytoplasmic side of the membrane. Residues 362-382 (INYEMGFRMIITNILYVVFLV) form a helical membrane-spanning segment. The Extracellular segment spans residues 383 to 394 (QFDYMNLKFKTD).

It belongs to the insect chemoreceptor superfamily. Gustatory receptor (GR) family. Gr22e subfamily. As to expression, expressed in neurons of the terminal external chemosensory organ of larvae.

It localises to the cell membrane. Its function is as follows. Probable gustatory receptor which mediates acceptance or avoidance behavior, depending on its substrates. In Drosophila melanogaster (Fruit fly), this protein is Putative gustatory receptor 22a (Gr22a).